The primary structure comprises 79 residues: Calcium/calmodulin-dependent protein kinase II inhibitor 2 (79 aa).

The segment at Met1–Gly21 is disordered. The segment at Lys43–Lys69 is inhibitory domain.

Belongs to the CAMK2N family. Interacts with CAMK2A and CAMK2B in the presence of Ca(2+)/calmodulin or after autophosphorylation.

It localises to the nucleus. Its subcellular location is the cytoplasm. The protein resides in the cytosol. The protein localises to the synapse. Functionally, potent and specific cellular inhibitor of CaM-kinase II (CAMK2). Traps Ca(2+)/calmodulin on CAMK2. This is Calcium/calmodulin-dependent protein kinase II inhibitor 2 (CAMK2N2) from Bos taurus (Bovine).